Here is a 1400-residue protein sequence, read N- to C-terminus: MSSFESDSASDAESAFSDASSDFTPSSSVKSKGKVPLRDSTNTTAQPSAPATGDASDQYQKLSQLEHILKRPDTYIGSVEKTGVEMWSFDAATESMIYKEVHIVPGLYKIFDEILVNAADNKIRDPSMRNIKVNIDAENNTISVMNDGKGIPIEIHKKEKIYIPELIFGNLLTSSNYDDDEKKVTGGRNGYGAKLCNIFSTEFVLETADLNTSQVYKQTWTNNMANLTKPKITKLKSKKEYTKVTFKPDLSKFHMEMLDDDILSVLRRRVYDLCGTVKDCNIYLNDKKLSIRNFKSYVEMYVNAIRERSPDPVAPEGETRNYSTIVHEVFNDRWEVAFAVSDGSFNQVSFVNSIATTSGGTHVKYVSDQIITKLIDALTKKEKGKKKLNIKPQEVRNNMFVFINCLIENPAFTSQTKEQLTTRVAQFGGKPSEKIVISDQFIAKILKTSIADKIRTIVNANEDKEMSKADGSRKSRIKNQVKLVDANKAGTKEGYKCTLILTEGDSAMPLAVAGLTVVGRDYYGCFPLRGKLLNVREASIEQVSKNAEINSIKQIMGLQHKKRYTPENIKSLRYGHIMIMTDQDQDGSHIKGLIINFLETSFPGLLEIPGFLLEFITPIVKVTITGRGNHRVIPFYNMPEFEKWRETEGTTCKWKHKYFKGLGTSLESEGREYFAALDRHMKSFHALQDGDSQYIDMAFSKKKADERKDWLQAFRPGTHLDPQIREIPISEFINKELILFSMADNVRSIPSILDGFKPGQRKVLYGCFKRNLRSEIKVAQLVGYISEHTGYHHGEGSLAQTIVGLAQNFVGANNLNLLQPIGLFGSRAAGGKDFSAVRYIHTNITDLTRVIFNPLDDDLYTYVQDDAQTVEPEAYLPIIPMLLVNGAEGIGTGWSTNIPSFNPVDIVANIRRMMNGEEPVDMTPWFKGWEGDLERISPEKYKVSGKIEQVDDDTVEITEIPIKTWTNSVKEFLLAGLGNDKPWIKDMEEQHGINIRFVVRLSKEEMDKSLRMGLLERFKLISSISLSNMVAFDPQGRIKKYSSANEILKDYYWARLELYQRRKDMMAENFQNQLTRLSEQARFIKLIIEKKLTIANKKRSEMVDDLKKLKFTRFNKNGKPVHDEPLVEAEELAEEEEEAAGDISQLNLGLVAPEDESQYKPETTYSQYDYLLGMAIWSLTRERYEKLLRQRDEKQEELNELLKKSAKDLWNSDLDDFLVGWEEFLRADIEARNSFGPTAKTSTRKRARKSTKSEPAQKKTKSSTPKASTPTIKAEATPAQPVVKEETNKQPDLLSFFSKEPSVAKTVSAAPPKRKTPKSKPKKEIVSLFSDSSDDDITSFSVGDAKPTPKPSTNNILDELEDLKSSTFTPKVGAAGRRRPKSYALAESDGNESDEDYMSE.

Residues 1–30 are compositionally biased toward low complexity; that stretch reads MSSFESDSASDAESAFSDASSDFTPSSSVK. Positions 1-57 are disordered; sequence MSSFESDSASDAESAFSDASSDFTPSSSVKSKGKVPLRDSTNTTAQPSAPATGDASD. Positions 39–57 are enriched in polar residues; sequence DSTNTTAQPSAPATGDASD. ATP-binding positions include Asn-117, Asn-146, 174–176, and 187–194; these read SSN and GRNGYGAK. The segment at 379–386 is interaction with DNA; sequence TKKEKGKK. 415–417 serves as a coordination point for ATP; it reads QTK. The 117-residue stretch at 497–613 folds into the Toprim domain; the sequence is CTLILTEGDS…GLLEIPGFLL (117 aa). Mg(2+) is bound by residues Glu-503, Asp-582, and Asp-584. Positions 749–1214 constitute a Topo IIA-type catalytic domain; it reads IPSILDGFKP…SAKDLWNSDL (466 aa). Tyr-839 acts as the O-(5'-phospho-DNA)-tyrosine intermediate in catalysis. The tract at residues 1019-1028 is interaction with DNA; it reads KLISSISLSN. The disordered stretch occupies residues 1235 to 1400; sequence FGPTAKTSTR…NESDEDYMSE (166 aa). Positions 1262–1271 are enriched in low complexity; the sequence is SSTPKASTPT. The segment covering 1312-1321 has biased composition (basic residues); that stretch reads PKRKTPKSKP. Over residues 1389–1400 the composition is skewed to acidic residues; that stretch reads DGNESDEDYMSE.

The protein belongs to the type II topoisomerase family. Homodimer. Mg(2+) is required as a cofactor. Requires Mn(2+) as cofactor. It depends on Ca(2+) as a cofactor.

It is found in the nucleus. It catalyses the reaction ATP-dependent breakage, passage and rejoining of double-stranded DNA.. Control of topological states of DNA by transient breakage and subsequent rejoining of DNA strands. Topoisomerase II makes double-strand breaks. The polypeptide is DNA topoisomerase 2 (TOP2) (Meyerozyma guilliermondii (strain ATCC 6260 / CBS 566 / DSM 6381 / JCM 1539 / NBRC 10279 / NRRL Y-324) (Yeast)).